The primary structure comprises 362 residues: MKASLRLRLDQLCDRHEELTALLADAEVISDNKRFRKLSREHSDLTEITEVWGKYRQAEEDIETAEMMKSDPDFKDMAEEEIQANKVLLEELESQLNILMIPKDPNDSNAAYLEIRAGTGGDEAAIFSGDLFRMYSKYAESQGWRIEVLSENEGEHGGFKEVICRVDGDGVYGRLKFESGAHRVQRVPATESQGRVHTSACTVAILPEIDVDTNVEINPADLRIDTYRASGAGGQHINKTDSAVRITHIPTGTVVECQEERSQHKNKAKAMALLVSRLENAKRAAADAATSEMRRDLVGSGDRSERIRTYNYPQGRMTDHRINLTLYKLDAIMEGDLTELLDSLHREYQADQLAMLAQENGG.

N5-methylglutamine is present on Gln235.

It belongs to the prokaryotic/mitochondrial release factor family. Methylated by PrmC. Methylation increases the termination efficiency of RF1.

It localises to the cytoplasm. Peptide chain release factor 1 directs the termination of translation in response to the peptide chain termination codons UAG and UAA. This Acinetobacter baumannii (strain AYE) protein is Peptide chain release factor 1.